The sequence spans 101 residues: TrfB transcriptional repressor protein (101 aa).

A DNA-binding region (H-T-H motif) is located at residues 37–56 (QATFATSLGLTRGAVSQAVH).

Its function is as follows. In conjunction with KorB, inhibits the transcription of kilA, trfA and korAB operons. In conjunction with KorC is responsible for the negative control of kilC and kilE operons. This is TrfB transcriptional repressor protein (trfB) from Escherichia coli.